Consider the following 331-residue polypeptide: Glycerol-3-phosphate dehydrogenase [NAD(P)+] (331 aa).

5 residues coordinate NADPH: serine 10, tryptophan 11, arginine 31, arginine 32, and lysine 105. Residues lysine 105 and glycine 135 each contribute to the sn-glycerol 3-phosphate site. Alanine 139 provides a ligand contact to NADPH. The sn-glycerol 3-phosphate site is built by lysine 190, aspartate 243, serine 253, arginine 254, and asparagine 255. Residue lysine 190 is the Proton acceptor of the active site. Position 254 (arginine 254) interacts with NADPH. The NADPH site is built by valine 279 and glutamate 281.

This sequence belongs to the NAD-dependent glycerol-3-phosphate dehydrogenase family.

Its subcellular location is the cytoplasm. It catalyses the reaction sn-glycerol 3-phosphate + NAD(+) = dihydroxyacetone phosphate + NADH + H(+). The catalysed reaction is sn-glycerol 3-phosphate + NADP(+) = dihydroxyacetone phosphate + NADPH + H(+). Its pathway is membrane lipid metabolism; glycerophospholipid metabolism. In terms of biological role, catalyzes the reduction of the glycolytic intermediate dihydroxyacetone phosphate (DHAP) to sn-glycerol 3-phosphate (G3P), the key precursor for phospholipid synthesis. The polypeptide is Glycerol-3-phosphate dehydrogenase [NAD(P)+] (Corynebacterium diphtheriae (strain ATCC 700971 / NCTC 13129 / Biotype gravis)).